We begin with the raw amino-acid sequence, 250 residues long: Accessory gland-specific peptide 26Aa (250 aa).

A signal peptide spans 1 to 18 (MNQILLCSQILLLFFTVA). The segment at 79 to 100 (DYPINNSKSRKNSSTLPSPILT) is disordered. The span at 82–95 (INNSKSRKNSSTLP) shows a compositional bias: polar residues. N-linked (GlcNAc...) asparagine glycans are attached at residues Asn-83, Asn-90, and Asn-131. Disordered regions lie at residues 172–191 (NVQNARKSTKSCKKRPSKDI) and 230–250 (NNPATDVPTGKSPSEGNPSTT). Residues 178-187 (KSTKSCKKRP) are compositionally biased toward basic residues. The span at 240-250 (KSPSEGNPSTT) shows a compositional bias: polar residues.

Proteolytically cleaved as it is secreted and in the recipient female. As to expression, main cells of the accessory glands of males.

It is found in the secreted. The protein localises to the extracellular space. Functionally, this protein is transferred from male to female's hemolymph during mating, affecting egglaying and behavior after mating. This is Accessory gland-specific peptide 26Aa (Acp26Aa) from Drosophila mauritiana (Fruit fly).